Consider the following 247-residue polypeptide: V-type proton ATPase subunit D (247 aa).

It belongs to the V-ATPase D subunit family. V-ATPase is a heteromultimeric enzyme made up of two complexes: the ATP-hydrolytic V1 complex and the proton translocation V0 complex. The V1 complex consists of three catalytic AB heterodimers that form a heterohexamer, three peripheral stalks each consisting of EG heterodimers, one central rotor including subunits D and F, and the regulatory subunits C and H. The proton translocation complex V0 consists of the proton transport subunit a, a ring of proteolipid subunits c9c'', rotary subunit d, subunits e and f, and the accessory subunits ATP6AP1/Ac45 and ATP6AP2/PRR. Interacts with SNX10.

It localises to the membrane. Its subcellular location is the cytoplasmic vesicle. It is found in the clathrin-coated vesicle membrane. The protein localises to the cytoplasm. The protein resides in the cytoskeleton. It localises to the microtubule organizing center. Its subcellular location is the centrosome. It is found in the cell projection. The protein localises to the cilium. Its function is as follows. Subunit of the V1 complex of vacuolar(H+)-ATPase (V-ATPase), a multisubunit enzyme composed of a peripheral complex (V1) that hydrolyzes ATP and a membrane integral complex (V0) that translocates protons. V-ATPase is responsible for acidifying and maintaining the pH of intracellular compartments and in some cell types, is targeted to the plasma membrane, where it is responsible for acidifying the extracellular environment. May play a role in cilium biogenesis through regulation of the transport and the localization of proteins to the cilium. The chain is V-type proton ATPase subunit D (ATP6V1D) from Oryctolagus cuniculus (Rabbit).